We begin with the raw amino-acid sequence, 311 residues long: MGNQAGSKTKLVIIQGPTASGKSELAVRLAEACGGDVVNADSMQVYRGMDIGTAKPSPELVARVPHHLYDIVDPDVNFTAADYRREAGRVITEIHSRGKRPILVGGTGLYIKTLIGGLAPSPGADDTIRAELEEDARSEGAAALHDRLAQVDPAAAARLHPNDRVRIVRALEVFLMTGKPLSEFQEEHRFADEPYDCLKLGISVERDDLYRRINERVNRMFAEGFVEEVSGLLNAGYSPDLKAMGAIGYKEVCAYLAGTCSLDEARELVQRNTRRYAKRQLTWFRKDPAIKWVEYPANFDSISTIAMKFFG.

16-23 serves as a coordination point for ATP; that stretch reads GPTASGKS. Residue 18-23 participates in substrate binding; it reads TASGKS. The tract at residues 41–44 is interaction with substrate tRNA; the sequence is DSMQ.

The protein belongs to the IPP transferase family. In terms of assembly, monomer. The cofactor is Mg(2+).

It catalyses the reaction adenosine(37) in tRNA + dimethylallyl diphosphate = N(6)-dimethylallyladenosine(37) in tRNA + diphosphate. Functionally, catalyzes the transfer of a dimethylallyl group onto the adenine at position 37 in tRNAs that read codons beginning with uridine, leading to the formation of N6-(dimethylallyl)adenosine (i(6)A). In Geobacter sulfurreducens (strain ATCC 51573 / DSM 12127 / PCA), this protein is tRNA dimethylallyltransferase.